We begin with the raw amino-acid sequence, 154 residues long: Acidic phospholipase A2 2 (154 aa).

Residues 1 to 19 (MHPAHLLVPLGVCVSLLGA) form the signal peptide. Residues 20 to 27 (ARIPPLPL) constitute a propeptide that is removed on maturation. Cystine bridges form between Cys-38–Cys-104, Cys-54–Cys-153, Cys-56–Cys-72, Cys-71–Cys-132, Cys-78–Cys-125, Cys-88–Cys-118, and Cys-111–Cys-123. The Ca(2+) site is built by Tyr-55, Gly-57, and Gly-59. His-75 is a catalytic residue. Ca(2+) is bound at residue Asp-76. Asp-126 is an active-site residue.

It belongs to the phospholipase A2 family. Group I subfamily. D49 sub-subfamily. Monomer. It depends on Ca(2+) as a cofactor. In terms of tissue distribution, expressed by the venom gland.

It is found in the secreted. It catalyses the reaction a 1,2-diacyl-sn-glycero-3-phosphocholine + H2O = a 1-acyl-sn-glycero-3-phosphocholine + a fatty acid + H(+). In terms of biological role, snake venom phospholipase A2 (PLA2) that shows moderate enzymatic activity and exhibits procoagulant activity. PLA2 catalyzes the calcium-dependent hydrolysis of the 2-acyl groups in 3-sn-phosphoglycerides. This chain is Acidic phospholipase A2 2, found in Pseudonaja textilis (Eastern brown snake).